A 172-amino-acid polypeptide reads, in one-letter code: Large ribosomal subunit protein uL10 (172 aa).

Belongs to the universal ribosomal protein uL10 family. As to quaternary structure, part of the ribosomal stalk of the 50S ribosomal subunit. The N-terminus interacts with L11 and the large rRNA to form the base of the stalk. The C-terminus forms an elongated spine to which L12 dimers bind in a sequential fashion forming a multimeric L10(L12)X complex.

Its function is as follows. Forms part of the ribosomal stalk, playing a central role in the interaction of the ribosome with GTP-bound translation factors. The chain is Large ribosomal subunit protein uL10 from Chlorobium luteolum (strain DSM 273 / BCRC 81028 / 2530) (Pelodictyon luteolum).